A 426-amino-acid polypeptide reads, in one-letter code: Dihydroorotase (426 aa).

The Zn(2+) site is built by H58 and H60. Residues 60-62 (HLR) and N92 each bind substrate. Residues D150, H177, and H230 each contribute to the Zn(2+) site. A substrate-binding site is contributed by N276. D303 serves as a coordination point for Zn(2+). Residue D303 is part of the active site. Residues H307 and 321–322 (FG) each bind substrate.

It belongs to the metallo-dependent hydrolases superfamily. DHOase family. Class I DHOase subfamily. Zn(2+) is required as a cofactor.

It catalyses the reaction (S)-dihydroorotate + H2O = N-carbamoyl-L-aspartate + H(+). It functions in the pathway pyrimidine metabolism; UMP biosynthesis via de novo pathway; (S)-dihydroorotate from bicarbonate: step 3/3. Catalyzes the reversible cyclization of carbamoyl aspartate to dihydroorotate. The chain is Dihydroorotase from Listeria monocytogenes serotype 4a (strain HCC23).